Consider the following 274-residue polypeptide: Formamidopyrimidine-DNA glycosylase (274 aa).

Catalysis depends on Pro2, which acts as the Schiff-base intermediate with DNA. Residue Glu3 is the Proton donor of the active site. Lys57 serves as the catalytic Proton donor; for beta-elimination activity. Residues His92, Arg111, and Lys152 each contribute to the DNA site. An FPG-type zinc finger spans residues 237–271; sequence QVYGRKGEECNDCGSIIEAKVIGQRNSFYCPKCQR. The active-site Proton donor; for delta-elimination activity is Arg261.

The protein belongs to the FPG family. In terms of assembly, monomer. Requires Zn(2+) as cofactor.

It catalyses the reaction Hydrolysis of DNA containing ring-opened 7-methylguanine residues, releasing 2,6-diamino-4-hydroxy-5-(N-methyl)formamidopyrimidine.. The enzyme catalyses 2'-deoxyribonucleotide-(2'-deoxyribose 5'-phosphate)-2'-deoxyribonucleotide-DNA = a 3'-end 2'-deoxyribonucleotide-(2,3-dehydro-2,3-deoxyribose 5'-phosphate)-DNA + a 5'-end 5'-phospho-2'-deoxyribonucleoside-DNA + H(+). Its function is as follows. Involved in base excision repair of DNA damaged by oxidation or by mutagenic agents. Acts as a DNA glycosylase that recognizes and removes damaged bases. Has a preference for oxidized purines, such as 7,8-dihydro-8-oxoguanine (8-oxoG). Has AP (apurinic/apyrimidinic) lyase activity and introduces nicks in the DNA strand. Cleaves the DNA backbone by beta-delta elimination to generate a single-strand break at the site of the removed base with both 3'- and 5'-phosphates. This chain is Formamidopyrimidine-DNA glycosylase, found in Glaesserella parasuis serovar 5 (strain SH0165) (Haemophilus parasuis).